A 429-amino-acid chain; its full sequence is Enolase (429 aa).

Q167 provides a ligand contact to (2R)-2-phosphoglycerate. Catalysis depends on E209, which acts as the Proton donor. Mg(2+) contacts are provided by D246, E289, and D316. Positions 341, 370, 371, and 392 each coordinate (2R)-2-phosphoglycerate. The Proton acceptor role is filled by K341.

The protein belongs to the enolase family. As to quaternary structure, component of the RNA degradosome, a multiprotein complex involved in RNA processing and mRNA degradation. Mg(2+) serves as cofactor.

It localises to the cytoplasm. The protein localises to the secreted. It is found in the cell surface. It catalyses the reaction (2R)-2-phosphoglycerate = phosphoenolpyruvate + H2O. It participates in carbohydrate degradation; glycolysis; pyruvate from D-glyceraldehyde 3-phosphate: step 4/5. Functionally, catalyzes the reversible conversion of 2-phosphoglycerate (2-PG) into phosphoenolpyruvate (PEP). It is essential for the degradation of carbohydrates via glycolysis. The chain is Enolase from Pseudomonas aeruginosa (strain LESB58).